Consider the following 225-residue polypeptide: MNNILKNDWNNYIGNEFEKDYYLKLRKNLAQEYKTKTIYPDMYNIFNALHYTAFDDVKVVILGQDPYHGPNQAHGLSFSVNPGVRTPPSLLNIYKELKDDIGCYIPNNGYLKKWADQGVLLLNTVLTVRAGEANSHKNIGWQIFTDNIIKVLNTREKPIVFILWGNNAIRKEELITNPKHHIIKSVHPSPLSASRGFFGSKPFSKTNEFLKNDNEIPIDWQIENL.

Asp-65 acts as the Proton acceptor in catalysis.

It belongs to the uracil-DNA glycosylase (UDG) superfamily. UNG family.

Its subcellular location is the cytoplasm. It catalyses the reaction Hydrolyzes single-stranded DNA or mismatched double-stranded DNA and polynucleotides, releasing free uracil.. In terms of biological role, excises uracil residues from the DNA which can arise as a result of misincorporation of dUMP residues by DNA polymerase or due to deamination of cytosine. This is Uracil-DNA glycosylase from Clostridium botulinum (strain Alaska E43 / Type E3).